The chain runs to 357 residues: UDP-N-acetylglucosamine--N-acetylmuramyl-(pentapeptide) pyrophosphoryl-undecaprenol N-acetylglucosamine transferase (357 aa).

Residues 12 to 14, asparagine 124, arginine 162, serine 190, isoleucine 243, 262 to 267, and glutamine 288 each bind UDP-N-acetyl-alpha-D-glucosamine; these read TGG and ALTVAE.

Belongs to the glycosyltransferase 28 family. MurG subfamily.

The protein resides in the cell inner membrane. It carries out the reaction di-trans,octa-cis-undecaprenyl diphospho-N-acetyl-alpha-D-muramoyl-L-alanyl-D-glutamyl-meso-2,6-diaminopimeloyl-D-alanyl-D-alanine + UDP-N-acetyl-alpha-D-glucosamine = di-trans,octa-cis-undecaprenyl diphospho-[N-acetyl-alpha-D-glucosaminyl-(1-&gt;4)]-N-acetyl-alpha-D-muramoyl-L-alanyl-D-glutamyl-meso-2,6-diaminopimeloyl-D-alanyl-D-alanine + UDP + H(+). The protein operates within cell wall biogenesis; peptidoglycan biosynthesis. Functionally, cell wall formation. Catalyzes the transfer of a GlcNAc subunit on undecaprenyl-pyrophosphoryl-MurNAc-pentapeptide (lipid intermediate I) to form undecaprenyl-pyrophosphoryl-MurNAc-(pentapeptide)GlcNAc (lipid intermediate II). This chain is UDP-N-acetylglucosamine--N-acetylmuramyl-(pentapeptide) pyrophosphoryl-undecaprenol N-acetylglucosamine transferase, found in Alcanivorax borkumensis (strain ATCC 700651 / DSM 11573 / NCIMB 13689 / SK2).